A 695-amino-acid polypeptide reads, in one-letter code: Polyribonucleotide nucleotidyltransferase (695 aa).

The Mg(2+) site is built by Asp486 and Asp492. Positions Pro553 to Ile612 constitute a KH domain. The S1 motif domain occupies Gly622–Lys690.

It belongs to the polyribonucleotide nucleotidyltransferase family. The cofactor is Mg(2+).

It is found in the cytoplasm. The catalysed reaction is RNA(n+1) + phosphate = RNA(n) + a ribonucleoside 5'-diphosphate. Functionally, involved in mRNA degradation. Catalyzes the phosphorolysis of single-stranded polyribonucleotides processively in the 3'- to 5'-direction. The chain is Polyribonucleotide nucleotidyltransferase from Chlamydia trachomatis serovar D (strain ATCC VR-885 / DSM 19411 / UW-3/Cx).